Consider the following 70-residue polypeptide: NADH dehydrogenase [ubiquinone] 1 alpha subcomplex subunit 1 (70 aa).

Residues 1–21 traverse the membrane as a helical segment; the sequence is MWFEILPGLSVMGVCLLIPGL.

The protein belongs to the complex I NDUFA1 subunit family. In terms of assembly, complex I is composed of 45 different subunits. As to expression, primarily expressed in heart and skeletal muscle.

Its subcellular location is the mitochondrion inner membrane. Accessory subunit of the mitochondrial membrane respiratory chain NADH dehydrogenase (Complex I), that is believed not to be involved in catalysis. Complex I functions in the transfer of electrons from NADH to the respiratory chain. The immediate electron acceptor for the enzyme is believed to be ubiquinone. The polypeptide is NADH dehydrogenase [ubiquinone] 1 alpha subcomplex subunit 1 (NDUFA1) (Homo sapiens (Human)).